A 593-amino-acid polypeptide reads, in one-letter code: Proteasome-associated ATPase (593 aa).

Residues 5-94 (DDADSRAARW…KEEIDRLAQP (90 aa)) are a coiled coil. Residue 281-286 (GCGKTL) participates in ATP binding. The interval 574–593 (GKGADAGRSIETASNTGQYL) is disordered. Residues 584-593 (ETASNTGQYL) show a composition bias toward polar residues. Residues 592-593 (YL) are docks into pockets in the proteasome alpha-ring.

The protein belongs to the AAA ATPase family. In terms of assembly, homohexamer. Assembles into a hexameric ring structure that caps the 20S proteasome core. Strongly interacts with the prokaryotic ubiquitin-like protein Pup through a hydrophobic interface; the interacting region of ARC lies in its N-terminal coiled-coil domain. There is one Pup binding site per ARC hexamer ring. Upon ATP-binding, the C-terminus of ARC interacts with the alpha-rings of the proteasome core, possibly by binding to the intersubunit pockets.

It participates in protein degradation; proteasomal Pup-dependent pathway. Functionally, ATPase which is responsible for recognizing, binding, unfolding and translocation of pupylated proteins into the bacterial 20S proteasome core particle. May be essential for opening the gate of the 20S proteasome via an interaction with its C-terminus, thereby allowing substrate entry and access to the site of proteolysis. Thus, the C-termini of the proteasomal ATPase may function like a 'key in a lock' to induce gate opening and therefore regulate proteolysis. In Salinispora tropica (strain ATCC BAA-916 / DSM 44818 / JCM 13857 / NBRC 105044 / CNB-440), this protein is Proteasome-associated ATPase.